Consider the following 153-residue polypeptide: MAHPLVPQIIDLATPVAEELGLEVVGVVFHTHQSPPVLRVDIRNPQQDTGLNDCERMSRALEASLDAAEIVPDTYVLEVSSPGISRQLVTDREFISFKGFPVIISTTPPYDGQQEWIGQLIRRDEITLYLNQKGRVVEIPRSLITKVQLDERR.

This sequence belongs to the RimP family.

The protein resides in the cytoplasm. In terms of biological role, required for maturation of 30S ribosomal subunits. This is Ribosome maturation factor RimP from Nostoc punctiforme (strain ATCC 29133 / PCC 73102).